The sequence spans 880 residues: Translation initiation factor IF-2 (880 aa).

Residues 143-228 (EAEAKAKAKA…EAERNGDHHI (86 aa)) are compositionally biased toward basic and acidic residues. The interval 143 to 289 (EAEAKAKAKA…APESMAHGFN (147 aa)) is disordered. Over residues 249 to 262 (GRRARNKSNAKKRG) the composition is skewed to basic residues. The 170-residue stretch at 380–549 (SRAPVVTIMG…LLQAEVLELK (170 aa)) folds into the tr-type G domain. The G1 stretch occupies residues 389 to 396 (GHVDHGKT). 389-396 (GHVDHGKT) serves as a coordination point for GTP. Residues 414-418 (GITQH) are G2. The interval 435–438 (DTPG) is G3. Residues 435 to 439 (DTPGH) and 489 to 492 (NKMD) contribute to the GTP site. A G4 region spans residues 489–492 (NKMD). The tract at residues 525 to 527 (SAK) is G5.

This sequence belongs to the TRAFAC class translation factor GTPase superfamily. Classic translation factor GTPase family. IF-2 subfamily.

Its subcellular location is the cytoplasm. One of the essential components for the initiation of protein synthesis. Protects formylmethionyl-tRNA from spontaneous hydrolysis and promotes its binding to the 30S ribosomal subunits. Also involved in the hydrolysis of GTP during the formation of the 70S ribosomal complex. The protein is Translation initiation factor IF-2 of Shewanella putrefaciens (strain CN-32 / ATCC BAA-453).